The following is a 311-amino-acid chain: Apolipoprotein E (311 aa).

Positions 1-18 (MKALWAVLLVTLLTGCLA) are cleaved as a signal peptide. 8 consecutive repeat copies span residues 72–93 (ALMEDTMTEVKAYKKELEEQLG), 94–115 (PVAEETRARLGKEVQAAQARLG), 116–137 (ADMEDLRNRLGQYRNEVHTMLG), 138–159 (QSTEEIRARLSTHLRKMRKRLM), 160–181 (RDAEDLQKRLAVYKAGAREGAE), 182–203 (RGVSAIRERLGPLVEQGRQRTA), 204–225 (NLGAGAAQPLRDRAQAFGDRIR), and 226–247 (GRLEEVGNQARDRLEEVREHME). The tract at residues 72–247 (ALMEDTMTEV…RLEEVREHME (176 aa)) is 8 X 22 AA approximate tandem repeats. Methionine sulfoxide is present on M135. Position 139 is a phosphoserine (S139). Residues 150-160 (HLRKMRKRLMR) are LDL and other lipoprotein receptors binding. 154 to 157 (MRKR) contributes to the heparin binding site. The interval 202-282 (TANLGAGAAQ…GWFEPIVEDM (81 aa)) is lipid-binding and lipoprotein association. Residue 221 to 228 (GDRIRGRL) coordinates heparin. Residues 258-311 (QQIRLQAEIFQARLKGWFEPIVEDMHRQWANLMEKIQASVATNPIITPVAQENQ) are homooligomerization. The specificity for association with VLDL stretch occupies residues 270–282 (RLKGWFEPIVEDM).

This sequence belongs to the apolipoprotein A1/A4/E family. In terms of assembly, homotetramer. May interact with ABCA1; functionally associated with ABCA1 in the biogenesis of HDLs. May interact with APP/A4 amyloid-beta peptide; the interaction is extremely stable in vitro but its physiological significance is unclear. May interact with MAPT. May interact with MAP2. In the cerebrospinal fluid, interacts with secreted SORL1. Interacts with PMEL; this allows the loading of PMEL luminal fragment on ILVs to induce fibril nucleation. Post-translationally, APOE exists as multiple glycosylated and sialylated glycoforms within cells and in plasma. The extent of glycosylation and sialylation are tissue and context specific. In terms of processing, glycated in plasma VLDL. Phosphorylated by FAM20C in the extracellular medium.

It localises to the secreted. The protein resides in the extracellular space. The protein localises to the extracellular matrix. It is found in the extracellular vesicle. Its subcellular location is the endosome. It localises to the multivesicular body. Functionally, APOE is an apolipoprotein, a protein associating with lipid particles, that mainly functions in lipoprotein-mediated lipid transport between organs via the plasma and interstitial fluids. APOE is a core component of plasma lipoproteins and is involved in their production, conversion and clearance. Apolipoproteins are amphipathic molecules that interact both with lipids of the lipoprotein particle core and the aqueous environment of the plasma. As such, APOE associates with chylomicrons, chylomicron remnants, very low density lipoproteins (VLDL) and intermediate density lipoproteins (IDL) but shows a preferential binding to high-density lipoproteins (HDL). It also binds a wide range of cellular receptors including the LDL receptor/LDLR and the very low-density lipoprotein receptor/VLDLR that mediate the cellular uptake of the APOE-containing lipoprotein particles. Finally, APOE also has a heparin-binding activity and binds heparan-sulfate proteoglycans on the surface of cells, a property that supports the capture and the receptor-mediated uptake of APOE-containing lipoproteins by cells. This chain is Apolipoprotein E (Apoe), found in Mus musculus (Mouse).